Here is a 400-residue protein sequence, read N- to C-terminus: Tryptophan synthase beta chain (400 aa).

Residue Lys-91 is modified to N6-(pyridoxal phosphate)lysine.

Belongs to the TrpB family. In terms of assembly, tetramer of two alpha and two beta chains. Pyridoxal 5'-phosphate is required as a cofactor.

The enzyme catalyses (1S,2R)-1-C-(indol-3-yl)glycerol 3-phosphate + L-serine = D-glyceraldehyde 3-phosphate + L-tryptophan + H2O. The protein operates within amino-acid biosynthesis; L-tryptophan biosynthesis; L-tryptophan from chorismate: step 5/5. Its function is as follows. The beta subunit is responsible for the synthesis of L-tryptophan from indole and L-serine. This is Tryptophan synthase beta chain from Listeria monocytogenes serovar 1/2a (strain ATCC BAA-679 / EGD-e).